The primary structure comprises 371 residues: 4-hydroxy-3-methylbut-2-en-1-yl diphosphate synthase (flavodoxin) (371 aa).

[4Fe-4S] cluster is bound by residues cysteine 268, cysteine 271, cysteine 303, and glutamate 310.

The protein belongs to the IspG family. The cofactor is [4Fe-4S] cluster.

The catalysed reaction is (2E)-4-hydroxy-3-methylbut-2-enyl diphosphate + oxidized [flavodoxin] + H2O + 2 H(+) = 2-C-methyl-D-erythritol 2,4-cyclic diphosphate + reduced [flavodoxin]. It functions in the pathway isoprenoid biosynthesis; isopentenyl diphosphate biosynthesis via DXP pathway; isopentenyl diphosphate from 1-deoxy-D-xylulose 5-phosphate: step 5/6. Its function is as follows. Converts 2C-methyl-D-erythritol 2,4-cyclodiphosphate (ME-2,4cPP) into 1-hydroxy-2-methyl-2-(E)-butenyl 4-diphosphate. This is 4-hydroxy-3-methylbut-2-en-1-yl diphosphate synthase (flavodoxin) from Macrococcus caseolyticus (strain JCSC5402) (Macrococcoides caseolyticum).